We begin with the raw amino-acid sequence, 422 residues long: Solute carrier family 35 member D3 (422 aa).

Transmembrane regions (helical) follow at residues 9 to 29 (VLGISVAIAHGVFSGSLNILL), 38 to 58 (FSFLTLVQCLTSSTAALSLEL), 64 to 84 (LIAVPPFGLSLARSFAGVAVL), 103 to 123 (MYVVFKRCLPLVTMLIGVLVL), 131 to 151 (GVLAAVLITTCGAALAGAGDL), 155 to 175 (PIGYVTGVLAVLVHAAYLVLI), 187 to 207 (LTAQYVIAVSATPLLVICSFA), 224 to 244 (AMVSIFVACILIGCAMNFTTL), 257 to 277 (FVGVVKSIATITVGMVAFSDV), and 280 to 300 (TSLFIAGVVVNTLGSIIYCVA). Positions 339-365 (AKSGNSEPESAEGAGDSVQQGGQESRG) are disordered. Over residues 355-364 (SVQQGGQESR) the composition is skewed to polar residues.

The protein belongs to the TPT transporter family. SLC35D subfamily. Could interact with ATG14, BECN1 and PIK3C3 that form the PI3KC3-C1/AIC/autophagy initiation complex; enhancing the formation of the AIC and promoting autophagy. Expressed in brain. Expressed in subsets of dopaminergic neurons. Expressed in maturing megakaryocytes.

The protein resides in the cytoplasmic vesicle. It localises to the secretory vesicle. It is found in the synaptic vesicle membrane. The protein localises to the early endosome membrane. Its subcellular location is the endoplasmic reticulum membrane. The enzyme catalyses UDP-alpha-D-glucose(in) = UDP-alpha-D-glucose(out). With respect to regulation, inhibited by proton uncouplers that directly abolish the proton electrochemical gradient. Probable UDP-glucose transmembrane transporter involved in UDP-glucose transport from the cytosol to the lumen of synaptic vesicles. It is involved in platelet dense granules maturation. Its function is as follows. Alternatively, could function as a molecular adapter enhancing the formation of the PI3KC3-C1/AIC/autophagy initiation complex to promote autophagy in dopaminergic neurons. Could also regulate the plasma membrane localization of the D(1A) dopamine receptor/DRD1 and dopamine signaling. In Mus musculus (Mouse), this protein is Solute carrier family 35 member D3.